Consider the following 184-residue polypeptide: Putative DNA-directed RNA polymerase subunit 454R (184 aa).

Belongs to the archaeal Rpo5/eukaryotic RPB5 RNA polymerase subunit family.

In terms of biological role, component of the DNA-dependent RNA polymerase that catalyzes the transcription in the cytoplasm of viral DNA into RNA using the four ribonucleoside triphosphates as substrates. The polypeptide is Putative DNA-directed RNA polymerase subunit 454R (Invertebrate iridescent virus 6 (IIV-6)).